A 298-amino-acid polypeptide reads, in one-letter code: Esterase Rv0045c (298 aa).

The Nucleophile role is filled by Ser-122. Active-site residues include Asp-146 and His-277.

The protein belongs to the AB hydrolase superfamily. Monomer.

It catalyses the reaction a carboxylic ester + H2O = an alcohol + a carboxylate + H(+). The catalysed reaction is a butanoate ester + H2O = an aliphatic alcohol + butanoate + H(+). The enzyme catalyses an acetyl ester + H2O = an aliphatic alcohol + acetate + H(+). It carries out the reaction a hexanoate ester + H2O = an aliphatic alcohol + hexanoate + H(+). It catalyses the reaction a tetradecanoate ester + H2O = an aliphatic alcohol + tetradecanoate + H(+). Its activity is regulated as follows. Hydrolysis of a fluorogenic ester substrate (MOAME) is allosterically inhibited by divalent transition metal cations (Cu(2+), Zn(2+), Ni(2+) and Co(2+)). Inhibition is largely due to a two order of magnitude drop in kcat, with relatively little change in KM. The thermal stability decreases with increasing concentrations of Ni(2+). Its function is as follows. Esterase likely involved in ester/lipid metabolism. Shows strong substrate selectivity toward short, straight chain alkyl esters with the highest activity toward four atom chains. The physiological substrate is unknown. Is able to hydrolyze ester bonds within a wide range of p-nitrophenyl derivatives (C2-C14) in vitro. The protein is Esterase Rv0045c of Mycobacterium tuberculosis (strain ATCC 25618 / H37Rv).